The following is a 132-amino-acid chain: MARVTVEDCIDKVDNRFELVLLAGHRARQISQGAQITVDRDNDKNPVVALREIAEETLSPADLKEDLIHSLQKHVEVDEPEMASEFITHSSESESIFNTSSQEEGTSFDHMSEEELLAGIEGLVVPEKSDDY.

Positions 89–109 (HSSESESIFNTSSQEEGTSFD) are disordered. The segment covering 96–105 (IFNTSSQEEG) has biased composition (polar residues).

The protein belongs to the RNA polymerase subunit omega family. The RNAP catalytic core consists of 2 alpha, 1 beta, 1 beta' and 1 omega subunit. When a sigma factor is associated with the core the holoenzyme is formed, which can initiate transcription.

The enzyme catalyses RNA(n) + a ribonucleoside 5'-triphosphate = RNA(n+1) + diphosphate. Functionally, promotes RNA polymerase assembly. Latches the N- and C-terminal regions of the beta' subunit thereby facilitating its interaction with the beta and alpha subunits. This is DNA-directed RNA polymerase subunit omega from Bartonella tribocorum (strain CIP 105476 / IBS 506).